A 662-amino-acid polypeptide reads, in one-letter code: DNA topoisomerase 4 subunit B (662 aa).

ATP contacts are provided by residues Y20, N60, D87, 129-135, and K359; that span reads GLHGVGV. In terms of domain architecture, Toprim spans 439–553; that stretch reads TELFIVEGDS…DGHLYLAKPP (115 aa). Positions 445, 518, and 520 each coordinate Mg(2+).

It belongs to the type II topoisomerase family. ParE type 1 subfamily. As to quaternary structure, heterotetramer composed of ParC and ParE. It depends on Mg(2+) as a cofactor. The cofactor is Mn(2+). Requires Ca(2+) as cofactor.

It catalyses the reaction ATP-dependent breakage, passage and rejoining of double-stranded DNA.. Functionally, topoisomerase IV is essential for chromosome segregation. It relaxes supercoiled DNA. Performs the decatenation events required during the replication of a circular DNA molecule. This chain is DNA topoisomerase 4 subunit B, found in Rickettsia bellii (strain RML369-C).